Consider the following 141-residue polypeptide: Large ribosomal subunit protein uL11 (141 aa).

It belongs to the universal ribosomal protein uL11 family. In terms of assembly, part of the ribosomal stalk of the 50S ribosomal subunit. Interacts with L10 and the large rRNA to form the base of the stalk. L10 forms an elongated spine to which L12 dimers bind in a sequential fashion forming a multimeric L10(L12)X complex. In terms of processing, one or more lysine residues are methylated.

Functionally, forms part of the ribosomal stalk which helps the ribosome interact with GTP-bound translation factors. The polypeptide is Large ribosomal subunit protein uL11 (Synechococcus sp. (strain ATCC 27144 / PCC 6301 / SAUG 1402/1) (Anacystis nidulans)).